The sequence spans 427 residues: N-myc proto-oncogene protein (427 aa).

Disordered stretches follow at residues 45–79, 144–173, 195–255, and 297–349; these read FELL…SVGL, EKLQ…SGRA, AAEG…STNK, and APSP…RNHN. 2 stretches are compositionally biased toward pro residues: residues 49 to 61 and 152 to 167; these read PTPP…PAPG and AAPP…PPVP. A compositionally biased stretch (low complexity) spans 210 to 221; sequence RASSSSSSSGDD. The span at 222–242 shows a compositional bias: acidic residues; sequence TLSDSEDDEDEEEEDEEEEID. Phosphoserine; by CK2 is present on residues Ser224 and Ser226. Positions 343 to 396 constitute a bHLH domain; that stretch reads ERRRNHNILERQRANDLRSSFLTLRDHVLSELVQNEKAAKVVILKKATEYVHSL. The segment at 396-417 is leucine-zipper; sequence LQAEEQKLLLEKEKLQARQEQL.

As to quaternary structure, efficient DNA binding requires dimerization with another bHLH protein. Binds DNA as a heterodimer with MAX.

The protein localises to the nucleus. This is N-myc proto-oncogene protein (MYCN) from Serinus canaria (Island canary).